We begin with the raw amino-acid sequence, 523 residues long: Cilia- and flagella-associated protein 157 (523 aa).

The tract at residues 1 to 31 is disordered; it reads MAPKKKPNKGGKEMQGKKIGGKKDASGTKTP. Over residues 10–26 the composition is skewed to basic and acidic residues; that stretch reads GGKEMQGKKIGGKKDAS. The residue at position 30 (Thr30) is a Phosphothreonine. Coiled coils occupy residues 32–191, 248–274, and 302–371; these read ELAM…LEKK, VQLL…LENT, and GTEE…VLIQ. The interval 419-440 is disordered; the sequence is QPDMGSHQDKQPQGLSKESQRI. Over residues 429 to 440 the composition is skewed to polar residues; that stretch reads QPQGLSKESQRI.

It belongs to the CFAP157 family. As to quaternary structure, interacts with TUBB and TUBA4A. Interacts with CEP350. Specifically expressed in tissues containing motile cilia.

The protein localises to the cytoplasm. Its subcellular location is the cytoskeleton. It is found in the cilium basal body. In terms of biological role, specifically required during spermatogenesis for flagellum morphogenesis and sperm motility. May be required to suppress the formation of supernumerary axonemes and ensure a correct ultrastructure. The sequence is that of Cilia- and flagella-associated protein 157 from Mus musculus (Mouse).